The following is a 280-amino-acid chain: Shikimate dehydrogenase (NADP(+)) (280 aa).

Shikimate-binding positions include 15-17 (SLS) and Thr62. Residue Lys66 is the Proton acceptor of the active site. Positions 88 and 104 each coordinate shikimate. Residues 128-132 (GAGGA), 151-156 (NRTEGR), and Ile222 each bind NADP(+). A shikimate-binding site is contributed by Tyr224. Position 245 (Gly245) interacts with NADP(+).

Belongs to the shikimate dehydrogenase family. Homodimer.

It catalyses the reaction shikimate + NADP(+) = 3-dehydroshikimate + NADPH + H(+). It functions in the pathway metabolic intermediate biosynthesis; chorismate biosynthesis; chorismate from D-erythrose 4-phosphate and phosphoenolpyruvate: step 4/7. In terms of biological role, involved in the biosynthesis of the chorismate, which leads to the biosynthesis of aromatic amino acids. Catalyzes the reversible NADPH linked reduction of 3-dehydroshikimate (DHSA) to yield shikimate (SA). The polypeptide is Shikimate dehydrogenase (NADP(+)) (Methanosarcina barkeri (strain Fusaro / DSM 804)).